A 330-amino-acid chain; its full sequence is Phosphate acyltransferase (330 aa).

The protein belongs to the PlsX family. As to quaternary structure, homodimer. Probably interacts with PlsY.

Its subcellular location is the cytoplasm. It catalyses the reaction a fatty acyl-[ACP] + phosphate = an acyl phosphate + holo-[ACP]. It functions in the pathway lipid metabolism; phospholipid metabolism. Functionally, catalyzes the reversible formation of acyl-phosphate (acyl-PO(4)) from acyl-[acyl-carrier-protein] (acyl-ACP). This enzyme utilizes acyl-ACP as fatty acyl donor, but not acyl-CoA. The protein is Phosphate acyltransferase of Campylobacter hominis (strain ATCC BAA-381 / DSM 21671 / CCUG 45161 / LMG 19568 / NCTC 13146 / CH001A).